Reading from the N-terminus, the 404-residue chain is 4-hydroxy-3-methylbut-2-en-1-yl diphosphate synthase (flavodoxin) (404 aa).

Residues C310, C313, C345, and E352 each coordinate [4Fe-4S] cluster.

Belongs to the IspG family. [4Fe-4S] cluster is required as a cofactor.

It catalyses the reaction (2E)-4-hydroxy-3-methylbut-2-enyl diphosphate + oxidized [flavodoxin] + H2O + 2 H(+) = 2-C-methyl-D-erythritol 2,4-cyclic diphosphate + reduced [flavodoxin]. It participates in isoprenoid biosynthesis; isopentenyl diphosphate biosynthesis via DXP pathway; isopentenyl diphosphate from 1-deoxy-D-xylulose 5-phosphate: step 5/6. In terms of biological role, converts 2C-methyl-D-erythritol 2,4-cyclodiphosphate (ME-2,4cPP) into 1-hydroxy-2-methyl-2-(E)-butenyl 4-diphosphate. The chain is 4-hydroxy-3-methylbut-2-en-1-yl diphosphate synthase (flavodoxin) from Treponema pallidum (strain Nichols).